A 137-amino-acid polypeptide reads, in one-letter code: Outer membrane protein assembly factor BamE (137 aa).

The N-terminal stretch at 1–18 is a signal peptide; the sequence is MQVKTLLGATFLALSLAS. A lipid anchor (N-palmitoyl cysteine) is attached at Cys-19. Cys-19 carries S-diacylglycerol cysteine lipidation.

This sequence belongs to the BamE family. Part of the Bam complex.

The protein resides in the cell outer membrane. In terms of biological role, part of the outer membrane protein assembly complex, which is involved in assembly and insertion of beta-barrel proteins into the outer membrane. This chain is Outer membrane protein assembly factor BamE, found in Haemophilus influenzae (strain ATCC 51907 / DSM 11121 / KW20 / Rd).